The sequence spans 398 residues: CCA-adding enzyme (398 aa).

2 residues coordinate ATP: Gly32 and Arg35. CTP contacts are provided by Gly32 and Arg35. Positions 45 and 47 each coordinate Mg(2+). ATP contacts are provided by Arg116, Asp159, Arg162, Arg165, and Arg168. Arg116, Asp159, Arg162, Arg165, and Arg168 together coordinate CTP.

This sequence belongs to the tRNA nucleotidyltransferase/poly(A) polymerase family. Bacterial CCA-adding enzyme type 3 subfamily. Homodimer. Mg(2+) is required as a cofactor.

It catalyses the reaction a tRNA precursor + 2 CTP + ATP = a tRNA with a 3' CCA end + 3 diphosphate. The enzyme catalyses a tRNA with a 3' CCA end + 2 CTP + ATP = a tRNA with a 3' CCACCA end + 3 diphosphate. Functionally, catalyzes the addition and repair of the essential 3'-terminal CCA sequence in tRNAs without using a nucleic acid template. Adds these three nucleotides in the order of C, C, and A to the tRNA nucleotide-73, using CTP and ATP as substrates and producing inorganic pyrophosphate. tRNA 3'-terminal CCA addition is required both for tRNA processing and repair. Also involved in tRNA surveillance by mediating tandem CCA addition to generate a CCACCA at the 3' terminus of unstable tRNAs. While stable tRNAs receive only 3'-terminal CCA, unstable tRNAs are marked with CCACCA and rapidly degraded. The polypeptide is CCA-adding enzyme (Lacticaseibacillus paracasei (strain ATCC 334 / BCRC 17002 / CCUG 31169 / CIP 107868 / KCTC 3260 / NRRL B-441) (Lactobacillus paracasei)).